We begin with the raw amino-acid sequence, 376 residues long: 2-aminoethylphosphonate--pyruvate transaminase 2 (376 aa).

K194 is subject to N6-(pyridoxal phosphate)lysine.

The protein belongs to the class-V pyridoxal-phosphate-dependent aminotransferase family. PhnW subfamily. In terms of assembly, homodimer. The cofactor is pyridoxal 5'-phosphate.

The catalysed reaction is (2-aminoethyl)phosphonate + pyruvate = phosphonoacetaldehyde + L-alanine. Involved in phosphonate degradation. The polypeptide is 2-aminoethylphosphonate--pyruvate transaminase 2 (Burkholderia lata (strain ATCC 17760 / DSM 23089 / LMG 22485 / NCIMB 9086 / R18194 / 383)).